Consider the following 138-residue polypeptide: Large ribosomal subunit protein eL14A (138 aa).

S2 carries the post-translational modification N-acetylserine.

This sequence belongs to the eukaryotic ribosomal protein eL14 family. As to quaternary structure, component of the large ribosomal subunit (LSU). Mature yeast ribosomes consist of a small (40S) and a large (60S) subunit. The 40S small subunit contains 1 molecule of ribosomal RNA (18S rRNA) and 33 different proteins (encoded by 57 genes). The large 60S subunit contains 3 rRNA molecules (25S, 5.8S and 5S rRNA) and 46 different proteins (encoded by 81 genes). N-terminally acetylated by acetyltransferase NatA.

The protein resides in the cytoplasm. In terms of biological role, component of the ribosome, a large ribonucleoprotein complex responsible for the synthesis of proteins in the cell. The small ribosomal subunit (SSU) binds messenger RNAs (mRNAs) and translates the encoded message by selecting cognate aminoacyl-transfer RNA (tRNA) molecules. The large subunit (LSU) contains the ribosomal catalytic site termed the peptidyl transferase center (PTC), which catalyzes the formation of peptide bonds, thereby polymerizing the amino acids delivered by tRNAs into a polypeptide chain. The nascent polypeptides leave the ribosome through a tunnel in the LSU and interact with protein factors that function in enzymatic processing, targeting, and the membrane insertion of nascent chains at the exit of the ribosomal tunnel. The protein is Large ribosomal subunit protein eL14A of Saccharomyces cerevisiae (strain ATCC 204508 / S288c) (Baker's yeast).